Here is a 170-residue protein sequence, read N- to C-terminus: tRNA-splicing endonuclease (170 aa).

Catalysis depends on residues Tyr110, His116, and Lys147.

It belongs to the tRNA-intron endonuclease family. Archaeal short subfamily. As to quaternary structure, homotetramer; although the tetramer contains four active sites, only two participate in the cleavage. Therefore, it should be considered as a dimer of dimers.

It carries out the reaction pretRNA = a 3'-half-tRNA molecule with a 5'-OH end + a 5'-half-tRNA molecule with a 2',3'-cyclic phosphate end + an intron with a 2',3'-cyclic phosphate and a 5'-hydroxyl terminus.. In terms of biological role, endonuclease that removes tRNA introns. Cleaves pre-tRNA at the 5'- and 3'-splice sites to release the intron. The products are an intron and two tRNA half-molecules bearing 2',3' cyclic phosphate and 5'-OH termini. Recognizes a pseudosymmetric substrate in which 2 bulged loops of 3 bases are separated by a stem of 4 bp. The sequence is that of tRNA-splicing endonuclease from Pyrococcus furiosus (strain ATCC 43587 / DSM 3638 / JCM 8422 / Vc1).